The chain runs to 692 residues: Elongation factor G (692 aa).

One can recognise a tr-type G domain in the interval 8 to 282 (KDYRNIGIMA…AVVDYLPSPL (275 aa)). GTP is bound by residues 17 to 24 (AHIDAGKT), 81 to 85 (DTPGH), and 135 to 138 (NKMD).

The protein belongs to the TRAFAC class translation factor GTPase superfamily. Classic translation factor GTPase family. EF-G/EF-2 subfamily.

It localises to the cytoplasm. Its function is as follows. Catalyzes the GTP-dependent ribosomal translocation step during translation elongation. During this step, the ribosome changes from the pre-translocational (PRE) to the post-translocational (POST) state as the newly formed A-site-bound peptidyl-tRNA and P-site-bound deacylated tRNA move to the P and E sites, respectively. Catalyzes the coordinated movement of the two tRNA molecules, the mRNA and conformational changes in the ribosome. The protein is Elongation factor G (fusA) of Mycoplasmopsis pulmonis (strain UAB CTIP) (Mycoplasma pulmonis).